A 318-amino-acid chain; its full sequence is Leucine-rich repeat domain-containing protein YddK (318 aa).

LRR repeat units lie at residues 109–129 (NFTSINLDNNQFTHFDATNYD), 130–151 (RLVKLSLNSNALESINFPQGRN), 153–173 (SITHISMNNNALRNIDIDRLS), 174–194 (SVTYFSAAHNQLEFVQLESCE), 195–216 (WLQYLNLSHNQLTDIVAGNKNE), 217–237 (LLLLDLSHNKLTSLHNDLFPN), 238–258 (LNTLLINNNLLSEIKIFYSNF), 260–280 (NVQTLNAANNQLKYINLDFLT), and 284–305 (SIKSLRLDNNKITHIDTNNTSD).

This chain is Leucine-rich repeat domain-containing protein YddK (yddK), found in Escherichia coli (strain K12).